Reading from the N-terminus, the 536-residue chain is SNW domain-containing protein 1 (536 aa).

Residues 1–46 (MALTSFLPAPTQLSQDQLEAEEKARSQRSRQTSLVSSRREPPPYGY) are disordered. Residue A2 is modified to N-acetylalanine. At S14 the chain carries Phosphoserine. Residue K23 forms a Glycyl lysine isopeptide (Lys-Gly) (interchain with G-Cter in SUMO2) linkage. The tract at residues 59–79 (GDGGAFPEIHVAQYPLDMGRK) is interaction with PPIL1. Glycyl lysine isopeptide (Lys-Gly) (interchain with G-Cter in SUMO2) cross-links involve residues K81, K97, K115, K122, K141, K158, and K170. The SNW stretch occupies residues 174–339 (AQYIRYTPSQ…KARERRAGIK (166 aa)). Residues S182 and S190 each carry the phosphoserine modification. A Glycyl lysine isopeptide (Lys-Gly) (interchain with G-Cter in SUMO2) cross-link involves residue K193. The segment at 209–233 (PPRFKINKKIPRGPPSPPAPVMHSP) is disordered. Residues S224, S232, and S234 each carry the phosphoserine modification. Residues K240, K258, K286, K339, K344, K416, K441, and K452 each participate in a glycyl lysine isopeptide (Lys-Gly) (interchain with G-Cter in SUMO2) cross-link. Residues 311–386 (KMAQKEKEKH…RSKLQRNENR (76 aa)) form a disordered region. Basic and acidic residues-rich tracts occupy residues 472–489 (FVPD…RGRE) and 503–530 (KFLE…EHEG). The tract at residues 472–536 (FVPDKEFSGS…EHEGKKRRKE (65 aa)) is disordered. Phosphoserine occurs at positions 479 and 481. K509 participates in a covalent cross-link: Glycyl lysine isopeptide (Lys-Gly) (interchain with G-Cter in SUMO2).

It belongs to the SNW family. In terms of assembly, identified in the spliceosome C complex. Associates with U4/U6-U5 tri-small nuclear ribonucleoproteins (U4/U6-U5 tri-snRNPs). Component of the minor spliceosome, which splices U12-type introns. Interacts with SKI, SMAD2,SMAD3, RBPJ, RB1, PABPN1, MAGEA1, SIRT1, FOXN3, U2AF2, PPIL1, DAXX and ATP1B4. Interacts with VDR and RXRA; preferentially associates with VDR:RXRA heterodimers. Interacts with NCOR2. Interacts with MAML1. Interacts with NOTCH1 NICD; the interaction involves multimerized NOTCH1 NICD. Forms a complex with NOTCH1 NICD and MAML1; the association is dissociated by RBPJ. Associates with positive transcription elongation factor b (P-TEFb). Component of the SNARP complex which consists at least of SNIP1, SNW1, THRAP3, BCLAF1 and PNN.

The protein resides in the nucleus. Its function is as follows. Involved in pre-mRNA splicing as component of the spliceosome. As a component of the minor spliceosome, involved in the splicing of U12-type introns in pre-mRNAs. Required in the specific splicing of CDKN1A pre-mRNA; the function probably involves the recruitment of U2AF2 to the mRNA. May recruit PPIL1 to the spliceosome. May be involved in cyclin-D1/CCND1 mRNA stability through the SNARP complex which associates with both the 3'end of the CCND1 gene and its mRNA. Involved in transcriptional regulation. Modulates TGF-beta-mediated transcription via association with SMAD proteins, MYOD1-mediated transcription via association with PABPN1, RB1-mediated transcriptional repression, and retinoid-X receptor (RXR)- and vitamin D receptor (VDR)-dependent gene transcription in a cell line-specific manner probably involving coactivators NCOA1 and GRIP1. Is involved in NOTCH1-mediated transcriptional activation. Binds to multimerized forms of Notch intracellular domain (NICD) and is proposed to recruit transcriptional coactivators such as MAML1 to form an intermediate preactivation complex which associates with DNA-bound CBF-1/RBPJ to form a transcriptional activation complex by releasing SNW1 and redundant NOTCH1 NICD. The polypeptide is SNW domain-containing protein 1 (SNW1) (Bos taurus (Bovine)).